Consider the following 121-residue polypeptide: Small ribosomal subunit protein uS13 (121 aa).

The tract at residues 91-121 (HRRGLPVRGQNSKNNARTRKGPRRTVANKKK) is disordered. Over residues 106–121 (ARTRKGPRRTVANKKK) the composition is skewed to basic residues.

It belongs to the universal ribosomal protein uS13 family. As to quaternary structure, part of the 30S ribosomal subunit. Forms a loose heterodimer with protein S19. Forms two bridges to the 50S subunit in the 70S ribosome.

Functionally, located at the top of the head of the 30S subunit, it contacts several helices of the 16S rRNA. In the 70S ribosome it contacts the 23S rRNA (bridge B1a) and protein L5 of the 50S subunit (bridge B1b), connecting the 2 subunits; these bridges are implicated in subunit movement. Contacts the tRNAs in the A and P-sites. The sequence is that of Small ribosomal subunit protein uS13 from Bacillus cereus (strain ZK / E33L).